The chain runs to 1133 residues: Exportin-4 (1133 aa).

Belongs to the exportin family. As to quaternary structure, interacts with Ran and cargo proteins in a GTP-dependent manner.

The protein localises to the cytoplasm. It is found in the nucleus. Its function is as follows. Mediates the nuclear export of proteins (cargos). In the nucleus binds cooperatively to its cargo and to the GTPase Ran in its active GTP-bound form. Docking of this trimeric complex to the nuclear pore complex (NPC) is mediated through binding to nucleoporins. Upon transit of a nuclear export complex into the cytoplasm, disassembling of the complex and hydrolysis of Ran-GTP to Ran-GDP cause release of the cargo from the export receptor. Xpo4 then return to the nuclear compartment and mediate another round of transport. The directionality of nuclear export is thought to be conferred by an asymmetric distribution of the GTP- and GDP-bound forms of Ran between the cytoplasm and nucleus. The polypeptide is Exportin-4 (xpo4) (Dictyostelium discoideum (Social amoeba)).